Consider the following 46-residue polypeptide: L-amino-acid oxidase (46 aa).

Asn31 carries an N-linked (GlcNAc...) asparagine glycan.

The protein belongs to the flavin monoamine oxidase family. FIG1 subfamily. FAD serves as cofactor.

The protein localises to the secreted. It is found in the lysosome. The protein resides in the cytoplasmic vesicle. It localises to the secretory vesicle. Its subcellular location is the acrosome. The enzyme catalyses an L-alpha-amino acid + O2 + H2O = a 2-oxocarboxylate + H2O2 + NH4(+). It catalyses the reaction L-tryptophan + O2 + H2O = indole-3-pyruvate + H2O2 + NH4(+). It carries out the reaction L-phenylalanine + O2 + H2O = 3-phenylpyruvate + H2O2 + NH4(+). The catalysed reaction is L-tyrosine + O2 + H2O = 3-(4-hydroxyphenyl)pyruvate + H2O2 + NH4(+). The enzyme catalyses L-arginine + O2 + H2O = 5-guanidino-2-oxopentanoate + H2O2 + NH4(+). It functions in the pathway amino-acid degradation; L-tryptophan degradation via pyruvate pathway. Functionally, secreted L-amino-acid oxidase that acts as a key immunoregulator. Has preference for L-aromatic amino acids: converts phenylalanine (Phe), tyrosine (Tyr) and tryptophan (Trp) to phenylpyruvic acid (PP), hydroxyphenylpyruvic acid (HPP), and indole-3-pyruvic acid (I3P), respectively. Also has weak L-arginine oxidase activity. Acts as a negative regulator of anti-tumor immunity by mediating Trp degradation via an indole pyruvate pathway that activates the transcription factor AHR. IL4I1-mediated Trp catabolism generates I3P, giving rise to indole metabolites (indole-3-acetic acid (IAA) and indole-3-aldehyde (I3A)) and kynurenic acid, which act as ligands for AHR, a ligand-activated transcription factor that plays important roles in immunity and cancer. AHR activation by indoles following IL4I1-mediated Trp degradation enhances tumor progression by promoting cancer cell motility and suppressing adaptive immunity. Also has an immunoregulatory function in some immune cells, probably by mediating Trp degradation and promoting downstream AHR activation: inhibits T-cell activation and proliferation, promotes the differentiation of naive CD4(+) T-cells into FOXP3(+) regulatory T-cells (Treg) and regulates the development and function of B-cells. Also regulates M2 macrophage polarization by inhibiting T-cell activation. Also has antibacterial properties by inhibiting growth of Gram negative and Gram positive bacteria through the production of NH4(+) and H2O2. The polypeptide is L-amino-acid oxidase (Mus spretus (Western Mediterranean mouse)).